The sequence spans 457 residues: UPF0210 protein Sfum_2948 (457 aa).

This sequence belongs to the UPF0210 family. As to quaternary structure, homodimer.

This Syntrophobacter fumaroxidans (strain DSM 10017 / MPOB) protein is UPF0210 protein Sfum_2948.